The following is a 278-amino-acid chain: Elongation factor Ts 1, mitochondrial (278 aa).

Belongs to the EF-Ts family.

The protein localises to the mitochondrion. Functionally, associates with the EF-Tu.GDP complex and induces the exchange of GDP to GTP. It remains bound to the aminoacyl-tRNA.EF-Tu.GTP complex up to the GTP hydrolysis stage on the ribosome. The chain is Elongation factor Ts 1, mitochondrial from Trypanosoma cruzi (strain CL Brener).